We begin with the raw amino-acid sequence, 260 residues long: 3-methyl-2-oxobutanoate hydroxymethyltransferase (260 aa).

Positions 44 and 83 each coordinate Mg(2+). 3-methyl-2-oxobutanoate is bound by residues 44-45, Asp83, and Lys113; that span reads DS. Mg(2+) is bound at residue Glu115. Residue Glu182 is the Proton acceptor of the active site.

This sequence belongs to the PanB family. As to quaternary structure, homodecamer; pentamer of dimers. Mg(2+) is required as a cofactor.

Its subcellular location is the cytoplasm. It catalyses the reaction 3-methyl-2-oxobutanoate + (6R)-5,10-methylene-5,6,7,8-tetrahydrofolate + H2O = 2-dehydropantoate + (6S)-5,6,7,8-tetrahydrofolate. The protein operates within cofactor biosynthesis; (R)-pantothenate biosynthesis; (R)-pantoate from 3-methyl-2-oxobutanoate: step 1/2. Catalyzes the reversible reaction in which hydroxymethyl group from 5,10-methylenetetrahydrofolate is transferred onto alpha-ketoisovalerate to form ketopantoate. This chain is 3-methyl-2-oxobutanoate hydroxymethyltransferase, found in Synechocystis sp. (strain ATCC 27184 / PCC 6803 / Kazusa).